The chain runs to 158 residues: Putative ribosomal RNA large subunit methyltransferase H (158 aa).

S-adenosyl-L-methionine-binding positions include L76, G107, and 126-131; that span reads LSRMTF.

It belongs to the RNA methyltransferase RlmH family.

It is found in the cytoplasm. The catalysed reaction is pseudouridine(1915) in 23S rRNA + S-adenosyl-L-methionine = N(3)-methylpseudouridine(1915) in 23S rRNA + S-adenosyl-L-homocysteine + H(+). Functionally, specifically methylates the pseudouridine at position 1915 (m3Psi1915) in 23S rRNA. This chain is Putative ribosomal RNA large subunit methyltransferase H, found in Methanocorpusculum labreanum (strain ATCC 43576 / DSM 4855 / Z).